A 1425-amino-acid polypeptide reads, in one-letter code: Death-associated protein kinase dapk-1 (1425 aa).

The Protein kinase domain maps to 28–289; that stretch reads YEIETELGSG…VEECLQHPWI (262 aa). ATP-binding positions include 34–42 and lysine 57; that span reads LGSGQFAVV. Aspartate 155 acts as the Proton acceptor in catalysis. 10 ANK repeats span residues 392–421, 425–454, 458–487, 491–520, 524–553, 557–586, 590–619, 623–652, 810–841, and 934–963; these read NGAT…NICA, NGDT…DVDS, TGET…RLDL, SGDT…PLHL, REET…PIDA, DGKT…DINH, HGDT…TVDS, NKKT…DVTL, GGYE…DPTE, and IGMK…ILDT. In terms of domain architecture, Roc spans 695 to 950; the sequence is LDTSLRRIKL…MELAKCRTNI (256 aa). The region spanning 1308–1389 is the Death domain; it reads ELACLLDPPH…DARDALYRTV (82 aa).

This sequence belongs to the protein kinase superfamily. CAMK Ser/Thr protein kinase family. DAP kinase subfamily. Interacts with ptrn-1. Mg(2+) serves as cofactor. In terms of tissue distribution, expressed in epidermis, muscles and neurons.

It localises to the cytoplasm. The protein resides in the cytosol. The protein localises to the cytoskeleton. The enzyme catalyses L-seryl-[protein] + ATP = O-phospho-L-seryl-[protein] + ADP + H(+). It catalyses the reaction L-threonyl-[protein] + ATP = O-phospho-L-threonyl-[protein] + ADP + H(+). Functionally, negative regulator of epidermal barrier repair and innate immune responses to wounding. The role in epidermal tissue integrity and wound healing is established through the inhibition of epidermal microtubule stability, possibly via the negative regulation of the microtubule minus-end binding protein ptrn-1. In epidermis, prevents expression of specific unc-44 isoforms probably by promoting nuclear localization of pinn-1, which in turn may affect sydn-1-ssup-72-mediated regulation of alternative polyadenylation of unc-44 mRNA. Appears to act downstream of or in parallel to muscarinic signaling in the regulation of autophagy. The protein is Death-associated protein kinase dapk-1 of Caenorhabditis elegans.